The primary structure comprises 295 residues: Tyrosine recombinase XerC (295 aa).

The region spanning 1–85 (MHILLQKYYN…ALRQFLNYLV (85 aa)) is the Core-binding (CB) domain. The region spanning 106–285 (YLPKNMDMEQ…DFQHLAQVYD (180 aa)) is the Tyr recombinase domain. Residues Arg-145, Lys-169, His-237, Arg-240, and His-263 contribute to the active site. Tyr-272 (O-(3'-phospho-DNA)-tyrosine intermediate) is an active-site residue.

It belongs to the 'phage' integrase family. XerC subfamily. In terms of assembly, forms a cyclic heterotetrameric complex composed of two molecules of XerC and two molecules of XerD.

Its subcellular location is the cytoplasm. Functionally, site-specific tyrosine recombinase, which acts by catalyzing the cutting and rejoining of the recombining DNA molecules. The XerC-XerD complex is essential to convert dimers of the bacterial chromosome into monomers to permit their segregation at cell division. It also contributes to the segregational stability of plasmids. The polypeptide is Tyrosine recombinase XerC (Histophilus somni (strain 2336) (Haemophilus somnus)).